The sequence spans 183 residues: MTAYWLAQGVGVIAFLIGITTFFNRDERRFKKQLSVYSAVIGVHFFLLGTYPAGASAILNAIRTLITLRTRSLWVMAIFIVLTGGIGLAKFHHPVELLPVIGTIVSTWALFCCKGLTMRCVMWFSTCCWVIHNFWAGSIGGTMIEGSFLLMNGLNIIRFWRMQKRGIDPFKVEKTPSAVDERG.

Residues 1-2 lie on the Periplasmic side of the membrane; the sequence is MT. A helical transmembrane segment spans residues 3–23; it reads AYWLAQGVGVIAFLIGITTFF. Topologically, residues 24-38 are cytoplasmic; the sequence is NRDERRFKKQLSVYS. Residues 39 to 59 form a helical membrane-spanning segment; it reads AVIGVHFFLLGTYPAGASAIL. Topologically, residues 60-71 are periplasmic; sequence NAIRTLITLRTR. 2 helical membrane passes run 72–92 and 93–113; these read SLWVMAIFIVLTGGIGLAKFH and HPVELLPVIGTIVSTWALFCC. At 114–133 the chain is on the periplasmic side; that stretch reads KGLTMRCVMWFSTCCWVIHN. The chain crosses the membrane as a helical span at residues 134–154; it reads FWAGSIGGTMIEGSFLLMNGL. The Cytoplasmic portion of the chain corresponds to 155-183; it reads NIIRFWRMQKRGIDPFKVEKTPSAVDERG.

It localises to the cell inner membrane. The protein is Inner membrane protein YgjV (ygjV) of Escherichia coli (strain K12).